The sequence spans 67 residues: MEGISIAKLLIIGALIVLLFGTNKLRSLGGDLGSAIKGFKKAMKDEDTSAARTTAEETPAERVSHKD.

The chain crosses the membrane as a helical span at residues Met-1 to Gly-21. Positions Lys-44–Asp-67 are disordered.

It belongs to the TatA/E family. TatE subfamily.

Its subcellular location is the cell inner membrane. Functionally, part of the twin-arginine translocation (Tat) system that transports large folded proteins containing a characteristic twin-arginine motif in their signal peptide across membranes. TatE shares overlapping functions with TatA. This Pantoea ananatis (strain LMG 20103) protein is Probable Sec-independent protein translocase protein TatE.